A 174-amino-acid polypeptide reads, in one-letter code: 3-hydroxyanthranilate 3,4-dioxygenase (174 aa).

Residue Arg-47 participates in O2 binding. Positions 51, 57, and 95 each coordinate Fe cation. Glu-57 contributes to the substrate binding site. The substrate site is built by Arg-99 and Glu-110. The Fe cation site is built by Cys-125, Cys-128, Cys-162, and Cys-165.

It belongs to the 3-HAO family. As to quaternary structure, homodimer. Requires Fe(2+) as cofactor.

The catalysed reaction is 3-hydroxyanthranilate + O2 = (2Z,4Z)-2-amino-3-carboxymuconate 6-semialdehyde. It functions in the pathway cofactor biosynthesis; NAD(+) biosynthesis; quinolinate from L-kynurenine: step 3/3. With respect to regulation, inhibited by 4-chloro-3-hydroxyanthranilate. Mechanism of inactivation involves the oxidation of the catalytic active site Fe(2+) to the catalytically inactive Fe(3+) oxidation state, superoxide production, and formation of two disulfide bonds between Cys-125 and Cys-128, and Cys-162 and Cys-165. Enzyme can be reactivated under reducing conditions. Its function is as follows. Catalyzes the oxidative ring opening of 3-hydroxyanthranilate to 2-amino-3-carboxymuconate semialdehyde, which spontaneously cyclizes to quinolinate. In Cupriavidus metallidurans (strain ATCC 43123 / DSM 2839 / NBRC 102507 / CH34) (Ralstonia metallidurans), this protein is 3-hydroxyanthranilate 3,4-dioxygenase.